We begin with the raw amino-acid sequence, 346 residues long: Cell division protein ZipA (346 aa).

Over 1 to 6 (MEDLQL) the chain is Periplasmic. A helical membrane pass occupies residues 7 to 27 (VLFVLGAIAIVAVLVHGFWSI). The Cytoplasmic segment spans residues 28-346 (RRQQPKSLKD…DYLHRIRANA (319 aa)). Disordered stretches follow at residues 76–103 (ANEA…QPVE) and 121–145 (QPDF…RQEP).

This sequence belongs to the ZipA family. As to quaternary structure, interacts with FtsZ via their C-terminal domains.

It is found in the cell inner membrane. Essential cell division protein that stabilizes the FtsZ protofilaments by cross-linking them and that serves as a cytoplasmic membrane anchor for the Z ring. Also required for the recruitment to the septal ring of downstream cell division proteins. This Shewanella sp. (strain MR-4) protein is Cell division protein ZipA.